The primary structure comprises 552 residues: Nucleolar complex protein 4 (552 aa).

Belongs to the CBF/MAK21 family. As to quaternary structure, interacts with NOP14 and MPP10. Interacts with snoRNA U3. Component of the ribosomal small subunit (SSU) processome composed of at least 40 protein subunits and snoRNA U3.

It localises to the nucleus. The protein localises to the nucleolus. In terms of biological role, involved in nucleolar processing of pre-18S ribosomal RNA and ribosome assembly. Has a role in the nuclear export of 40S pre-ribosomal subunit to the cytoplasm. Its subcellular location and association with pre-40S subunit are unaffected by RPS19 disruptions, suggesting it acts before the ribosomal protein. This is Nucleolar complex protein 4 (NOC4) from Saccharomyces cerevisiae (strain ATCC 204508 / S288c) (Baker's yeast).